Reading from the N-terminus, the 482-residue chain is Cysteine--tRNA ligase (482 aa).

Residue Cys-28 participates in Zn(2+) binding. Residues 30–40 (PTVYNFLHVGN) carry the 'HIGH' region motif. Residues Cys-208, His-233, and Glu-237 each coordinate Zn(2+). The short motif at 265–269 (KMSKS) is the 'KMSKS' region element. ATP is bound at residue Lys-268.

The protein belongs to the class-I aminoacyl-tRNA synthetase family. As to quaternary structure, monomer. It depends on Zn(2+) as a cofactor.

Its subcellular location is the cytoplasm. It catalyses the reaction tRNA(Cys) + L-cysteine + ATP = L-cysteinyl-tRNA(Cys) + AMP + diphosphate. This chain is Cysteine--tRNA ligase, found in Bdellovibrio bacteriovorus (strain ATCC 15356 / DSM 50701 / NCIMB 9529 / HD100).